Consider the following 526-residue polypeptide: MRNALFLIFISLCSVCKSSAQGYSNPVIPGFHPDPSVCKAGDDYYLVNSSFQYFPGVPLFHSKDLVHWEQIGNCLTRPSQLDLTNANSGSGIFAPTIRYNDGVFYMITTNVSGKGNFLVHTTDPRSEWSEPVWLEQGGIDPSLYFEDGKCFMVSNPDGYINLCEIDPMTGKQLSSSKRIWNGTGGRYAEGPHIYKKDGWYYLLISEGGTELGHKVTIARSRYIDGPYQGNPANPILTHANESGQSSPIQGTGHADLVEGTDGSWWMVCLAYRIMPGTHHTLGRETYLAPVRWDKDAWPVVNSNGTISLKMDVPTLPQQEMKGRPERIDFKEGKLSPEWIHLQNPEAKNYIFTKDGKLRLIATPVTLSDWKSPTFVALRQEHFDMEASAPVVLQKAGVNDEAGISVFMEFHSHYDLFVRQDKDRKRSVGLRYKLGEITHYAKEVSLPTDGEVELVVKSDINYYYFGYKVNGIYHDLGKMNTRYLSTETAGGFTGVVLGLYITSASKDSKAYADFEYFKYKGKPGENK.

Positions 1–20 are cleaved as a signal peptide; sequence MRNALFLIFISLCSVCKSSA. Asp34 functions as the Proton acceptor in the catalytic mechanism. The Proton donor role is filled by Glu189.

The protein belongs to the glycosyl hydrolase 43 family.

It localises to the periplasm. The catalysed reaction is Hydrolysis of terminal non-reducing alpha-L-arabinofuranoside residues in alpha-L-arabinosides.. Its pathway is glucan metabolism; xyloglucan degradation. Its function is as follows. Alpha-L-arabinofuranosidase involved in xyloglucan degradation by mediating the cleavage of terminal non-reducing alpha-L-arabinofuranoside residues in xyloglucan branches, converting the 'S' units to 'X' units. In Bacteroides ovatus (strain ATCC 8483 / DSM 1896 / JCM 5824 / BCRC 10623 / CCUG 4943 / NCTC 11153), this protein is Non-reducing end alpha-L-arabinofuranosidase BoGH43A.